The primary structure comprises 568 residues: bZIP transcription factor 60 (568 aa).

Composition is skewed to low complexity over residues 1 to 13 (MAEP…FADL) and 60 to 78 (TTSS…TSSA). Disordered stretches follow at residues 1–29 (MAEP…TLGD) and 45–134 (DFDV…RKKQ). Residues 1-240 (MAEPDLLAPF…PAKKARKTKK (240 aa)) lie on the Cytoplasmic side of the membrane. The segment covering 103–113 (GGKDGKDDEAK) has biased composition (basic and acidic residues). Positions 111 to 171 (EAKRRARLVR…AENAALKQQL (61 aa)) constitute a bZIP domain. The tract at residues 113–144 (KRRARLVRNRESAHQSRQRKKQYVEELEGKVK) is basic motif. Residues 150 to 157 (IADLTARI) are leucine-zipper. The helical transmembrane segment at 241 to 261 (VAGVSLLGLLFLMMVCGCLVP) threads the bilayer. Residues 262–568 (AVNRMYGAAY…LPFKSHSPHL (307 aa)) are Lumenal-facing. N-linked (GlcNAc...) asparagine glycosylation is found at Asn-307, Asn-452, Asn-456, Asn-488, and Asn-499. The segment at 479 to 510 (AIPLRGSTSNDTDHFKAPPKNHSQSHAGRKPV) is disordered.

The protein belongs to the bZIP family.

The protein resides in the endoplasmic reticulum membrane. It localises to the nucleus. Functionally, transcription factor involved in endoplasmic reticulum (ER) stress response. Acts as a ER stress sensor and activates the transcription factor BZIP50 and the chaperone BIP1. This chain is bZIP transcription factor 60, found in Oryza sativa subsp. japonica (Rice).